A 678-amino-acid chain; its full sequence is Serine/threonine-protein kinase PLK (678 aa).

The region spanning 22-309 is the Protein kinase domain; that stretch reads YRPGKLLGKG…VKECLDHSWL (288 aa). ATP contacts are provided by residues 28–36 and lysine 51; that span reads LGKGGFAYV. Aspartate 145 acts as the Proton acceptor in catalysis. A phosphothreonine; by autocatalysis mark is found at threonine 179 and threonine 183. POLO box domains lie at 435–516 and 563–644; these read YIMS…YLEN and FLKK…IIKA. A disordered region spans residues 658 to 678; sequence KDSTKKSASGSSTRQLGQGGE. The segment covering 663–678 has biased composition (polar residues); it reads KSASGSSTRQLGQGGE.

It belongs to the protein kinase superfamily. Ser/Thr protein kinase family. CDC5/Polo subfamily. As to quaternary structure, interacts with Kin-13. In terms of processing, autophosphorylated. Autophosphorylation is critical for its function in cell growth, cytokinesis and formation of flagella.

Its subcellular location is the cell projection. The protein localises to the cilium. It localises to the flagellum. The protein resides in the cytoplasm. It is found in the cytoskeleton. Its subcellular location is the flagellum basal body. The protein localises to the flagellum axoneme. It localises to the spindle. The protein resides in the membrane. The catalysed reaction is L-seryl-[protein] + ATP = O-phospho-L-seryl-[protein] + ADP + H(+). It carries out the reaction L-threonyl-[protein] + ATP = O-phospho-L-threonyl-[protein] + ADP + H(+). Inhibited by GW843286X (GW), an ATP-competitive inhibitor. Inhibition leads to reduced growth, increased number of cells with more than four nuclei, increased number of cells with condensed nuclei, cell cycle arrest at G2/M or G1/S phase depending on the treatment time with GW, and increased length of membrane-bound portions of the caudal and anterior flagella. Functionally, involved in cell cycle. Involved in cell division. Involved in cytokinesis. Involved in flagella biogenesis and in regulation of flagella length in interphase. Involved in formation of median bodies during interphase. Phosphorylates Kin-13 in vitro. Likely regulates microtubule (MT) depolymerizing activity of Kin-13. This chain is Serine/threonine-protein kinase PLK, found in Giardia intestinalis (strain ATCC 50803 / WB clone C6) (Giardia lamblia).